We begin with the raw amino-acid sequence, 567 residues long: Proline--tRNA ligase (567 aa).

This sequence belongs to the class-II aminoacyl-tRNA synthetase family. ProS type 1 subfamily. In terms of assembly, homodimer.

Its subcellular location is the cytoplasm. The enzyme catalyses tRNA(Pro) + L-proline + ATP = L-prolyl-tRNA(Pro) + AMP + diphosphate. Catalyzes the attachment of proline to tRNA(Pro) in a two-step reaction: proline is first activated by ATP to form Pro-AMP and then transferred to the acceptor end of tRNA(Pro). As ProRS can inadvertently accommodate and process non-cognate amino acids such as alanine and cysteine, to avoid such errors it has two additional distinct editing activities against alanine. One activity is designated as 'pretransfer' editing and involves the tRNA(Pro)-independent hydrolysis of activated Ala-AMP. The other activity is designated 'posttransfer' editing and involves deacylation of mischarged Ala-tRNA(Pro). The misacylated Cys-tRNA(Pro) is not edited by ProRS. This Fusobacterium nucleatum subsp. nucleatum (strain ATCC 25586 / DSM 15643 / BCRC 10681 / CIP 101130 / JCM 8532 / KCTC 2640 / LMG 13131 / VPI 4355) protein is Proline--tRNA ligase.